The following is a 207-amino-acid chain: Ribosome maturation factor RimM (207 aa).

A PRC barrel domain is found at 114 to 207; it reads DDEYYWVDLI…RIDSDWPLDY (94 aa).

It belongs to the RimM family. In terms of assembly, binds ribosomal protein uS19.

The protein resides in the cytoplasm. Functionally, an accessory protein needed during the final step in the assembly of 30S ribosomal subunit, possibly for assembly of the head region. Essential for efficient processing of 16S rRNA. May be needed both before and after RbfA during the maturation of 16S rRNA. It has affinity for free ribosomal 30S subunits but not for 70S ribosomes. This chain is Ribosome maturation factor RimM, found in Bordetella bronchiseptica (strain ATCC BAA-588 / NCTC 13252 / RB50) (Alcaligenes bronchisepticus).